The primary structure comprises 414 residues: Serine hydroxymethyltransferase (414 aa).

Residues L121 and G125–L127 each bind (6S)-5,6,7,8-tetrahydrofolate. At K229 the chain carries N6-(pyridoxal phosphate)lysine.

The protein belongs to the SHMT family. As to quaternary structure, homodimer. It depends on pyridoxal 5'-phosphate as a cofactor.

The protein localises to the cytoplasm. It catalyses the reaction (6R)-5,10-methylene-5,6,7,8-tetrahydrofolate + glycine + H2O = (6S)-5,6,7,8-tetrahydrofolate + L-serine. The protein operates within one-carbon metabolism; tetrahydrofolate interconversion. Its pathway is amino-acid biosynthesis; glycine biosynthesis; glycine from L-serine: step 1/1. Its function is as follows. Catalyzes the reversible interconversion of serine and glycine with tetrahydrofolate (THF) serving as the one-carbon carrier. This reaction serves as the major source of one-carbon groups required for the biosynthesis of purines, thymidylate, methionine, and other important biomolecules. Also exhibits THF-independent aldolase activity toward beta-hydroxyamino acids, producing glycine and aldehydes, via a retro-aldol mechanism. The chain is Serine hydroxymethyltransferase from Albidiferax ferrireducens (strain ATCC BAA-621 / DSM 15236 / T118) (Rhodoferax ferrireducens).